A 120-amino-acid chain; its full sequence is UPF0231 protein ETA_08290 (120 aa).

This sequence belongs to the UPF0231 family.

The polypeptide is UPF0231 protein ETA_08290 (Erwinia tasmaniensis (strain DSM 17950 / CFBP 7177 / CIP 109463 / NCPPB 4357 / Et1/99)).